A 179-amino-acid chain; its full sequence is Cytochrome b6-f complex iron-sulfur subunit (179 aa).

A helical membrane pass occupies residues 21-43 (LLTFGSVTGVALGALYPVVNYFI). Residues 61–162 (GNDVVLSKFL…VSVTDDKVFL (102 aa)) enclose the Rieske domain. Residues cysteine 108, histidine 110, cysteine 126, and histidine 129 each coordinate [2Fe-2S] cluster. A disulfide bond links cysteine 113 and cysteine 128.

This sequence belongs to the Rieske iron-sulfur protein family. The 4 large subunits of the cytochrome b6-f complex are cytochrome b6, subunit IV (17 kDa polypeptide, PetD), cytochrome f and the Rieske protein, while the 4 small subunits are PetG, PetL, PetM and PetN. The complex functions as a dimer. The cofactor is [2Fe-2S] cluster.

It is found in the cellular thylakoid membrane. The enzyme catalyses 2 oxidized [plastocyanin] + a plastoquinol + 2 H(+)(in) = 2 reduced [plastocyanin] + a plastoquinone + 4 H(+)(out). In terms of biological role, component of the cytochrome b6-f complex, which mediates electron transfer between photosystem II (PSII) and photosystem I (PSI), cyclic electron flow around PSI, and state transitions. The protein is Cytochrome b6-f complex iron-sulfur subunit of Synechococcus elongatus (strain ATCC 33912 / PCC 7942 / FACHB-805) (Anacystis nidulans R2).